The chain runs to 836 residues: TATA box-binding protein-associated factor RNA polymerase I subunit C (836 aa).

2 disordered regions span residues 662-683 (GDLS…QQDE) and 703-836 (HRGE…RMGF). Positions 738–754 (DASSAPRSQDLSTSEAR) are enriched in polar residues. Over residues 780–796 (RQTLRDHTDKLPLKRDT) the composition is skewed to basic and acidic residues. At Thr-802 the chain carries Phosphothreonine. The segment covering 803-828 (PPSQASSLQTMSFRQQTPVHSGSQPP) has biased composition (polar residues).

Component of the transcription factor SL1/TIF-IB complex, composed of TBP and at least TAF1A, TAF1B, TAF1C and TAF1D. In the complex interacts directly with TBP, TAF1A and TAF1B. Interaction of the SL1/TIF-IB subunits with TBP excludes interaction of TBP with the transcription factor IID (TFIID) subunits. Interacts with MYC and RRN3. Interacts with p53/TP53; the interaction prevents the association of SL1/TIF-IB with UBTF and represses RNA polymerase I transcription. Part of Pol I pre-initiation complex (PIC), in which Pol I core assembles with RRN3 and promoter-bound UTBF and SL1/TIF-IB complex.

The protein resides in the nucleus. The protein localises to the nucleolus. In terms of biological role, component of the transcription factor SL1/TIF-IB complex, which is involved in the assembly of the PIC (pre-initiation complex) during RNA polymerase I-dependent transcription. The rate of PIC formation probably is primarily dependent on the rate of association of SL1/TIF-IB with the rDNA promoter. SL1/TIF-IB is involved in stabilization of nucleolar transcription factor 1/UBTF on rDNA. Formation of SL1/TIF-IB excludes the association of TBP with TFIID subunits. Recruits RNA polymerase I to the rRNA gene promoter via interaction with RRN3. The polypeptide is TATA box-binding protein-associated factor RNA polymerase I subunit C (Taf1c) (Mus musculus (Mouse)).